The following is a 133-amino-acid chain: FPRL1 inhibitory protein (133 aa).

The first 28 residues, 1–28 (MKKNITKTIIASTVIAAGLLTQTNDAKA), serve as a signal peptide directing secretion.

It belongs to the CHIPS/FLIPr family.

It is found in the secreted. In terms of biological role, may be involved in countering the first line of host defense mechanisms. Impairs the leukocyte response to FPRL1 agonists by binding directly to host FPRL1. The protein is FPRL1 inhibitory protein (flr) of Staphylococcus aureus (strain Mu50 / ATCC 700699).